The sequence spans 160 residues: Cyclic pyranopterin monophosphate synthase (160 aa).

Substrate is bound by residues 75 to 77 (LCH) and 113 to 114 (ME). The active site involves Asp128.

It belongs to the MoaC family. Homohexamer; trimer of dimers.

It carries out the reaction (8S)-3',8-cyclo-7,8-dihydroguanosine 5'-triphosphate = cyclic pyranopterin phosphate + diphosphate. The protein operates within cofactor biosynthesis; molybdopterin biosynthesis. Catalyzes the conversion of (8S)-3',8-cyclo-7,8-dihydroguanosine 5'-triphosphate to cyclic pyranopterin monophosphate (cPMP). This chain is Cyclic pyranopterin monophosphate synthase, found in Methylobacterium nodulans (strain LMG 21967 / CNCM I-2342 / ORS 2060).